The chain runs to 324 residues: Alkanal monooxygenase beta chain (324 aa).

The protein belongs to the bacterial luciferase oxidoreductase family. As to quaternary structure, heterodimer of an alpha and a beta chain.

It carries out the reaction a long-chain fatty aldehyde + FMNH2 + O2 = a long-chain fatty acid + hnu + FMN + H2O + 2 H(+). In terms of biological role, light-emitting reaction in luminous bacteria. The specific role of the beta subunit is unknown, but it is absolutely required for bioluminescence activity. The protein is Alkanal monooxygenase beta chain (luxB) of Vibrio harveyi (Beneckea harveyi).